A 256-amino-acid chain; its full sequence is Thiazole synthase (256 aa).

K96 (schiff-base intermediate with DXP) is an active-site residue. 1-deoxy-D-xylulose 5-phosphate contacts are provided by residues G157, 183-184 (AG), and 205-206 (NT).

It belongs to the ThiG family. As to quaternary structure, homotetramer. Forms heterodimers with either ThiH or ThiS.

The protein localises to the cytoplasm. The catalysed reaction is [ThiS sulfur-carrier protein]-C-terminal-Gly-aminoethanethioate + 2-iminoacetate + 1-deoxy-D-xylulose 5-phosphate = [ThiS sulfur-carrier protein]-C-terminal Gly-Gly + 2-[(2R,5Z)-2-carboxy-4-methylthiazol-5(2H)-ylidene]ethyl phosphate + 2 H2O + H(+). It functions in the pathway cofactor biosynthesis; thiamine diphosphate biosynthesis. In terms of biological role, catalyzes the rearrangement of 1-deoxy-D-xylulose 5-phosphate (DXP) to produce the thiazole phosphate moiety of thiamine. Sulfur is provided by the thiocarboxylate moiety of the carrier protein ThiS. In vitro, sulfur can be provided by H(2)S. In Bacillus cereus (strain 03BB102), this protein is Thiazole synthase.